Reading from the N-terminus, the 1379-residue chain is DNA-directed RNA polymerase subunit beta (1379 aa).

It belongs to the RNA polymerase beta chain family. In terms of assembly, the RNAP catalytic core consists of 2 alpha, 1 beta, 1 beta' and 1 omega subunit. When a sigma factor is associated with the core the holoenzyme is formed, which can initiate transcription.

It carries out the reaction RNA(n) + a ribonucleoside 5'-triphosphate = RNA(n+1) + diphosphate. DNA-dependent RNA polymerase catalyzes the transcription of DNA into RNA using the four ribonucleoside triphosphates as substrates. This chain is DNA-directed RNA polymerase subunit beta, found in Campylobacter fetus subsp. fetus (strain 82-40).